The primary structure comprises 39 residues: Natriuretic peptide HsNP-a (39 aa).

The propeptide occupies 1–8 (SGSKTAKI). An intrachain disulfide couples Cys-12 to Cys-28.

This sequence belongs to the natriuretic peptide family. As to expression, expressed by the venom gland.

The protein localises to the secreted. Functionally, snake venom natriuretic peptide that targets both NPR1 and NPR2. Exhibits hypotensive and vasodepressor activities. This chain is Natriuretic peptide HsNP-a, found in Hoplocephalus stephensii (Stephens's banded snake).